A 385-amino-acid polypeptide reads, in one-letter code: Protein pelota homolog (385 aa).

The protein belongs to the eukaryotic release factor 1 family. Pelota subfamily. In terms of assembly, component of the Pelota-HBS1L complex, also named Dom34-Hbs1 complex, composed of PELO and HBS1L. A divalent metal cation is required as a cofactor.

The protein localises to the cytoplasm. Its function is as follows. Component of the Pelota-HBS1L complex, a complex that recognizes stalled ribosomes and triggers the No-Go Decay (NGD) pathway. In the Pelota-HBS1L complex, PELO recognizes ribosomes stalled at the 3' end of an mRNA and engages stalled ribosomes by destabilizing mRNA in the mRNA channel. Following mRNA extraction from stalled ribosomes by the SKI complex, the Pelota-HBS1L complex promotes recruitment of ABCE1, which drives the disassembly of stalled ribosomes, followed by degradation of damaged mRNAs as part of the NGD pathway. In Danio rerio (Zebrafish), this protein is Protein pelota homolog (pelo).